Here is a 42-residue protein sequence, read N- to C-terminus: Conodipine-M beta chain (42 aa).

As to quaternary structure, heterodimer of an alpha and a beta chains; probably disulfide-linked. In terms of tissue distribution, expressed by the venom duct.

It is found in the secreted. Its function is as follows. Heterodimer: conodipine-M catalyzes the calcium-dependent hydrolysis of the 2-acyl groups in 3-sn-phosphoglycerides. This activity may be supported by the alpha chain. Conodipine-M inhibits the binding of isradipine (a ligand specific for L-type calcium channel) to L-type calcium channels. The protein is Conodipine-M beta chain of Conus magus (Magical cone).